A 302-amino-acid chain; its full sequence is NAD kinase (302 aa).

The active-site Proton acceptor is aspartate 79. Residues 79 to 80, 153 to 154, arginine 181, aspartate 183, 194 to 199, alanine 218, and glutamine 252 contribute to the NAD(+) site; these read DG, ND, and TAYALS.

It belongs to the NAD kinase family. A divalent metal cation is required as a cofactor.

Its subcellular location is the cytoplasm. It catalyses the reaction NAD(+) + ATP = ADP + NADP(+) + H(+). Involved in the regulation of the intracellular balance of NAD and NADP, and is a key enzyme in the biosynthesis of NADP. Catalyzes specifically the phosphorylation on 2'-hydroxyl of the adenosine moiety of NAD to yield NADP. The sequence is that of NAD kinase from Ralstonia nicotianae (strain ATCC BAA-1114 / GMI1000) (Ralstonia solanacearum).